An 881-amino-acid polypeptide reads, in one-letter code: DNA mismatch repair protein MutS (881 aa).

An ATP-binding site is contributed by glycine 612–serine 619.

This sequence belongs to the DNA mismatch repair MutS family.

This protein is involved in the repair of mismatches in DNA. It is possible that it carries out the mismatch recognition step. This protein has a weak ATPase activity. The sequence is that of DNA mismatch repair protein MutS from Clostridium tetani (strain Massachusetts / E88).